Consider the following 290-residue polypeptide: Shikimate dehydrogenase (NADP(+)) (290 aa).

Shikimate contacts are provided by residues 24–26 (SKS) and Thr71. Lys75 serves as the catalytic Proton acceptor. Asn96 and Asp111 together coordinate shikimate. NADP(+)-binding positions include 135–139 (GAGGA), 159–164 (NRTKQR), and Ile228. Tyr230 serves as a coordination point for shikimate. Position 251 (Gly251) interacts with NADP(+).

This sequence belongs to the shikimate dehydrogenase family. In terms of assembly, homodimer.

The catalysed reaction is shikimate + NADP(+) = 3-dehydroshikimate + NADPH + H(+). It participates in metabolic intermediate biosynthesis; chorismate biosynthesis; chorismate from D-erythrose 4-phosphate and phosphoenolpyruvate: step 4/7. Involved in the biosynthesis of the chorismate, which leads to the biosynthesis of aromatic amino acids. Catalyzes the reversible NADPH linked reduction of 3-dehydroshikimate (DHSA) to yield shikimate (SA). In Bartonella tribocorum (strain CIP 105476 / IBS 506), this protein is Shikimate dehydrogenase (NADP(+)).